Consider the following 466-residue polypeptide: Prophage integrase IntF (466 aa).

One can recognise a Core-binding (CB) domain in the interval 134 to 239 (KTKVTFSVAW…LLRAFIKWSN (106 aa)). The Tyr recombinase domain occupies 268–445 (KADDCLQKEQ…PLDLLRKWHE (178 aa)). Residues Arg306, Lys328, His396, Arg399, and His422 contribute to the active site. Tyr432 functions as the O-(3'-phospho-DNA)-tyrosine intermediate in the catalytic mechanism.

This sequence belongs to the 'phage' integrase family.

Integrase is necessary for integration of the phage into the host genome by site-specific recombination. In conjunction with excisionase, integrase is also necessary for excision of the prophage from the host genome. The sequence is that of Prophage integrase IntF (intF) from Escherichia coli (strain K12).